The following is a 120-amino-acid chain: LOB domain-containing protein 8 (120 aa).

In terms of domain architecture, LOB spans 8–109; it reads RPCCVCITKN…AYLHELEEKI (102 aa).

The protein belongs to the LOB domain-containing protein family.

This is LOB domain-containing protein 8 (LBD8) from Arabidopsis thaliana (Mouse-ear cress).